A 362-amino-acid chain; its full sequence is MNIDGIPTRTLRAHPDRRAIDIIDQTRLPHALHWVRVATLEEAAHAIRAMQVRGAPLIGATAAYGLAIALDFEASDRRLAEAVALLGATRPTAVNLHWALARMENILRPLAPEARCDAAWAEAAAIAEEDVAQNAAIGQHGLKLWNDLIVADGQTLNIMTHCNAGWLATVDWGTALSPVYAAHDAGVPVHVWVSETRPRNQGLLTAWELEQHGVPHTLIADNAAGLLMRNGKVDAVIVGADRIAANGDVANKVGTYLKALACADNGIPFYVAAPRSTLDFACPEGASIPIEERDGDEFRLVHGLDSRGVPSALRQLPAGEDVANPAFDVTPNWLVKAIITERGVCPASRDGLLALYPEEARG.

Substrate contacts are provided by residues 53 to 55 (RGA), Arg90, and Gln201. Catalysis depends on Asp241, which acts as the Proton donor. 251–252 (NK) contributes to the substrate binding site.

Belongs to the eIF-2B alpha/beta/delta subunits family. MtnA subfamily.

It catalyses the reaction 5-(methylsulfanyl)-alpha-D-ribose 1-phosphate = 5-(methylsulfanyl)-D-ribulose 1-phosphate. It functions in the pathway amino-acid biosynthesis; L-methionine biosynthesis via salvage pathway; L-methionine from S-methyl-5-thio-alpha-D-ribose 1-phosphate: step 1/6. Catalyzes the interconversion of methylthioribose-1-phosphate (MTR-1-P) into methylthioribulose-1-phosphate (MTRu-1-P). This is Methylthioribose-1-phosphate isomerase from Dechloromonas aromatica (strain RCB).